We begin with the raw amino-acid sequence, 411 residues long: Serpin A12 (411 aa).

Positions 1 to 20 (MNLVLGLGLFLAGLLTVKGL) are cleaved as a signal peptide. N-linked (GlcNAc...) asparagine glycans are attached at residues asparagine 92 and asparagine 267. A reactive center loop region spans residues 364–382 (GTEGAAGSGAQTLPMETPR).

The protein belongs to the serpin family. Forms a stable complex with KLK7. Glycosylation slightly decreases affinity for heparin, but otherwise has no significant effect on KLK7 inhibitory activity or thermal stability of the protein. As to expression, expressed in visceral adipose tissues.

Its subcellular location is the secreted. Inhibition of KLK7 is enhanced by heparin. Adipokine that modulates insulin action by specifically inhibiting its target protease KLK7 in white adipose tissues. This Rattus norvegicus (Rat) protein is Serpin A12 (Serpina12).